A 904-amino-acid polypeptide reads, in one-letter code: Protein translocase subunit SecA (904 aa).

ATP contacts are provided by residues Q89, 107 to 111 (GEGKT), and D502. Residues C888, C890, C899, and H900 each coordinate Zn(2+).

It belongs to the SecA family. Monomer and homodimer. Part of the essential Sec protein translocation apparatus which comprises SecA, SecYEG and auxiliary proteins SecDF-YajC and YidC. Zn(2+) is required as a cofactor.

The protein resides in the cell inner membrane. Its subcellular location is the cytoplasm. It carries out the reaction ATP + H2O + cellular proteinSide 1 = ADP + phosphate + cellular proteinSide 2.. Its function is as follows. Part of the Sec protein translocase complex. Interacts with the SecYEG preprotein conducting channel. Has a central role in coupling the hydrolysis of ATP to the transfer of proteins into and across the cell membrane, serving both as a receptor for the preprotein-SecB complex and as an ATP-driven molecular motor driving the stepwise translocation of polypeptide chains across the membrane. This is Protein translocase subunit SecA from Roseobacter denitrificans (strain ATCC 33942 / OCh 114) (Erythrobacter sp. (strain OCh 114)).